A 311-amino-acid chain; its full sequence is Delta-1-pyrroline-5-carboxylate reductase kk1I (311 aa).

Positions 1–31 (MTKRESNTLAVLGCGMVFLVSLLDLANRLLG) are cleaved as a signal peptide. N59 carries an N-linked (GlcNAc...) asparagine glycan.

It belongs to the pyrroline-5-carboxylate reductase family.

Its pathway is secondary metabolite biosynthesis. Delta-1-pyrroline-5-carboxylate reductase; part of the gene cluster that mediates the biosynthesis of KK-1, a novel cyclic depsipeptide with 10 residues which is a promising active compound with high activity against many plant pathogens, especially Botrytis cinerea. Within the pathway, kk1I catalyzes the synthesis of the L-pipecolic acid residue of KK-1 from delta-1-pyrroline-5-carboxylate (P5C), a metabolic intermediate of lysine. The nonribosomal peptide synthetase (NRPS) kk1B catalyzes the elongation and cyclization of the decapeptide chain composed of 1 D-lactic acid residue (D-Lac), 1 pipecolic acid residue (Pip), 1 aspartic acid residue (Asp), 1 isoleucine residue (Ile), 1 glycine residue (Gly), 1 tyrosine residue (Tyr) and 4 valine residues (Val). The Asp, Ile and 3 Val residues are N-methylated by the 5 methyltransferase domains from the NRPS (found in modules 3, 5, 6, 7 and 9), whereas the Tyr residue is O-methylated by the cluster encoded O-methyltransferase kk1A. The thioesterase kk1J is likely to be involved in the corrective mechanism of peptide chain synthesis. The D-lactate dehydrogenase kk1H is involved in the synthesis of D-lactic acid from pyruvic acid, which is recognized by the A domain of the first kk1B module. The pyrroline-5-carboxylate reductase kk1I is involved in the synthesis of the L-pipecolic acid residue of KK-1 from delta-1-pyrroline-5-carboxylate (P5C), a metabolic intermediate of lysine. It still is unclear how kk1C and kk1D are involved in the production of KK-1. The polypeptide is Delta-1-pyrroline-5-carboxylate reductase kk1I (Curvularia clavata).